Here is a 154-residue protein sequence, read N- to C-terminus: MAL-like protein (154 aa).

Transmembrane regions (helical) follow at residues 24–44 (LFLT…FWVW), 61–81 (VLYV…SYLF), 99–119 (GTTG…TIIS), and 131–151 (VAAS…AFSI). Residues 24–154 (LFLTIPFAFF…ILHAFSIYYH (131 aa)) form the MARVEL domain.

It belongs to the MAL family.

Its subcellular location is the membrane. This is MAL-like protein (Mall) from Mus musculus (Mouse).